Here is a 144-residue protein sequence, read N- to C-terminus: Large ribosomal subunit protein uL15 (144 aa).

The interval 1–53 (MFLNTIKPGEGAKHAKRRVGRGIGSGLGKTAGRGHKGQKSRSGGFHKVGFEGG) is disordered. Over residues 21–31 (RGIGSGLGKTA) the composition is skewed to gly residues.

Belongs to the universal ribosomal protein uL15 family. In terms of assembly, part of the 50S ribosomal subunit.

Binds to the 23S rRNA. The polypeptide is Large ribosomal subunit protein uL15 (Laribacter hongkongensis (strain HLHK9)).